A 193-amino-acid chain; its full sequence is MVSKIMNKKYEKGLSLIESAMVLALAATVTAGVMFYYQSASDSNKSQNAISEVMSATSAINGLYIGQTSYSGLDSTILLNTSAIPDNYKDTTNKKITNPFGGELNVGPANNNTAFGYYLTLTRLDKAACVSLATLNLGTSAKGYGVNISGENNITSFGNSADQAAKSTAITPAEAATACKNTDSTNKVTYFMK.

Positions 1 to 13 (MVSKIMNKKYEKG) are cleaved as a propeptide — leader sequence. Position 14 is an N-methylleucine (Leu-14). Residues 14–35 (LSLIESAMVLALAATVTAGVMF) form a helical membrane-spanning segment. A disulfide bridge links Cys-129 with Cys-179.

It belongs to the N-Me-Phe pilin family. 10 to 100 laterally aligned filaments or bundle-forming pili coalesce into rope-like bundles. These form linkages between the bacteria within the enteropathogenic E.coli (EPEC) microcolonies that are attached to epithelial cells.

The protein resides in the fimbrium. The protein localises to the membrane. Major component of type IV bundle-forming pili (BFP) that plays a role in adherence to host cells and virulence. The chain is Major structural subunit of bundle-forming pilus (bfpA) from Escherichia coli O127:H6 (strain E2348/69 / EPEC).